A 403-amino-acid chain; its full sequence is Imidazolonepropionase (403 aa).

The Fe(3+) site is built by His-68 and His-70. The Zn(2+) site is built by His-68 and His-70. 4-imidazolone-5-propanoate is bound by residues Arg-77, Tyr-140, and His-173. Position 140 (Tyr-140) interacts with N-formimidoyl-L-glutamate. A Fe(3+)-binding site is contributed by His-238. His-238 contacts Zn(2+). Gln-241 is a binding site for 4-imidazolone-5-propanoate. Residue Asp-313 participates in Fe(3+) binding. Asp-313 is a binding site for Zn(2+). Residues Asn-315 and Gly-317 each contribute to the N-formimidoyl-L-glutamate site. Residue Thr-318 coordinates 4-imidazolone-5-propanoate.

Belongs to the metallo-dependent hydrolases superfamily. HutI family. The cofactor is Zn(2+). It depends on Fe(3+) as a cofactor.

It is found in the cytoplasm. The enzyme catalyses 4-imidazolone-5-propanoate + H2O = N-formimidoyl-L-glutamate. Its pathway is amino-acid degradation; L-histidine degradation into L-glutamate; N-formimidoyl-L-glutamate from L-histidine: step 3/3. Functionally, catalyzes the hydrolytic cleavage of the carbon-nitrogen bond in imidazolone-5-propanoate to yield N-formimidoyl-L-glutamate. It is the third step in the universal histidine degradation pathway. The polypeptide is Imidazolonepropionase (Psychromonas ingrahamii (strain DSM 17664 / CCUG 51855 / 37)).